A 354-amino-acid chain; its full sequence is Uroporphyrinogen decarboxylase (354 aa).

Substrate contacts are provided by residues 27 to 31, aspartate 77, tyrosine 154, threonine 209, and histidine 327; that span reads RQAGR.

Belongs to the uroporphyrinogen decarboxylase family. As to quaternary structure, homodimer.

The protein localises to the cytoplasm. It catalyses the reaction uroporphyrinogen III + 4 H(+) = coproporphyrinogen III + 4 CO2. The protein operates within porphyrin-containing compound metabolism; protoporphyrin-IX biosynthesis; coproporphyrinogen-III from 5-aminolevulinate: step 4/4. Its function is as follows. Catalyzes the decarboxylation of four acetate groups of uroporphyrinogen-III to yield coproporphyrinogen-III. This chain is Uroporphyrinogen decarboxylase, found in Actinobacillus pleuropneumoniae serotype 5b (strain L20).